Reading from the N-terminus, the 194-residue chain is Inner membrane-spanning protein YciB (194 aa).

The next 5 membrane-spanning stretches (helical) occupy residues 3–23 (LFIE…AGIY), 47–67 (IPAK…LTIY), 76–96 (WKVT…NTFF), 119–139 (LNLA…YIAF), and 149–169 (FKVF…ILFL).

This sequence belongs to the YciB family.

It localises to the cell inner membrane. Plays a role in cell envelope biogenesis, maintenance of cell envelope integrity and membrane homeostasis. This is Inner membrane-spanning protein YciB from Colwellia psychrerythraea (strain 34H / ATCC BAA-681) (Vibrio psychroerythus).